The following is a 276-amino-acid chain: Octanoyltransferase LipM (276 aa).

Residues 31–246 (GLIPPVIRFY…GFAKSLQIEL (216 aa)) form the BPL/LPL catalytic domain. Cys148 acts as the Acyl-thioester intermediate in catalysis.

It belongs to the octanoyltransferase LipM family. In terms of assembly, monomer.

It carries out the reaction octanoyl-[ACP] + L-lysyl-[protein] = N(6)-octanoyl-L-lysyl-[protein] + holo-[ACP] + H(+). It functions in the pathway protein modification; protein lipoylation via endogenous pathway; protein N(6)-(lipoyl)lysine from octanoyl-[acyl-carrier-protein]. Its function is as follows. Catalyzes the transfer of endogenously produced octanoic acid from octanoyl-acyl-carrier-protein onto the lipoyl domain of GcvH, an intermediate carrier during protein lipoylation. The chain is Octanoyltransferase LipM from Lysinibacillus sphaericus (strain C3-41).